Reading from the N-terminus, the 352-residue chain is C-C chemokine receptor type 5 (352 aa).

At 1–30 (MDYQVSSPTYDIDYYTSEPCQKINVKQIAG) the chain is on the extracellular side. Y3 carries the post-translational modification Sulfotyrosine. O-linked (GalNAc...) serine glycans are attached at residues S6 and S7. Residues Y10, Y14, and Y15 each carry the sulfotyrosine modification. Intrachain disulfides connect C20/C269 and C101/C178. The chain crosses the membrane as a helical span at residues 31–58 (RLLPPLYSLVFIFGFVGNILVVLILINC). Residues 59–68 (KRLKSMTDIY) lie on the Cytoplasmic side of the membrane. The helical transmembrane segment at 69 to 89 (LLNLAISDLLFLLTVPFWAHY) threads the bilayer. Residues 90-102 (AAAQWDFGNTMCQ) lie on the Extracellular side of the membrane. Residues 103-124 (LLTGLYFIGFFSGIFFIILLTI) form a helical membrane-spanning segment. The Cytoplasmic segment spans residues 125 to 141 (DRYLAIVHAVFALKART). The helical transmembrane segment at 142 to 166 (VTFGVVTSVITWVVAVFASLPGIIF) threads the bilayer. Over 167–198 (TRSQREGLHYTCSSHFPYSQYQFWKNFQTLKI) the chain is Extracellular. A helical membrane pass occupies residues 199-218 (VILGLVLPLLVMVICYSGIL). The Cytoplasmic segment spans residues 219–235 (KTLLRCRNEKKRHRAVR). The helical transmembrane segment at 236–260 (LIFTIMIVYFLFWAPYNIVLLLNTF) threads the bilayer. Topologically, residues 261–277 (QEFFGLNNCSSSNRLDQ) are extracellular. Residues 278–301 (AMQVTETLGMTHCCINPIIYAFVG) traverse the membrane as a helical segment. Topologically, residues 302 to 352 (EKFRNYLLVFFQKHIAKRFCKCCSIFQQEAPERASSVYTRSTGEQEISVGL) are cytoplasmic. Residues C321, C323, and C324 are each lipidated (S-palmitoyl cysteine). Phosphoserine; by BARK1 occurs at positions 336, 337, 342, and 349.

Belongs to the G-protein coupled receptor 1 family. As to quaternary structure, interacts with PRAF2. Efficient ligand binding to CCL3/MIP-1alpha and CCL4/MIP-1beta requires sulfation, O-glycosylation and sialic acid modifications. Glycosylation on Ser-6 is required for efficient binding of CCL4. Interacts with GRK2. Interacts with ARRB1 and ARRB2. Interacts with CNIH4. Interacts with S100A4; this interaction stimulates T-lymphocyte chemotaxis. In terms of processing, sulfated on at least 2 of the N-terminal tyrosines. Sulfation is required for efficient binding of the chemokines, CCL3 and CCL4. Palmitoylation in the C-terminal is important for cell surface expression. Post-translationally, phosphorylation on serine residues in the C-terminal is stimulated by binding CC chemokines especially by APO-RANTES. In terms of processing, O-glycosylated, but not N-glycosylated. Ser-6 appears to be the major site even if Ser-7 may be also O-glycosylated. Also sialylated glycans present which contribute to chemokine binding. Thr-16 and Ser-17 may also be glycosylated and, if so, with small moieties such as a T-antigen.

The protein resides in the cell membrane. In terms of biological role, receptor for a number of inflammatory CC-chemokines including CCL3/MIP-1-alpha, CCL4/MIP-1-beta and RANTES and subsequently transduces a signal by increasing the intracellular calcium ion level. May play a role in the control of granulocytic lineage proliferation or differentiation. Participates in T-lymphocyte migration to the infection site by acting as a chemotactic receptor. This chain is C-C chemokine receptor type 5 (CCR5), found in Theropithecus gelada (Gelada baboon).